The sequence spans 171 residues: Co-chaperone protein HscB (171 aa).

In terms of domain architecture, J spans 2–74; the sequence is DYFTLFGLPA…LTRAEYLLSL (73 aa).

Belongs to the HscB family. As to quaternary structure, interacts with HscA and stimulates its ATPase activity. Interacts with IscU.

Functionally, co-chaperone involved in the maturation of iron-sulfur cluster-containing proteins. Seems to help targeting proteins to be folded toward HscA. This Salmonella heidelberg (strain SL476) protein is Co-chaperone protein HscB.